Consider the following 131-residue polypeptide: Small ribosomal subunit protein uS8c (131 aa).

Belongs to the universal ribosomal protein uS8 family. Part of the 30S ribosomal subunit.

It localises to the plastid. Its subcellular location is the chloroplast. Functionally, one of the primary rRNA binding proteins, it binds directly to 16S rRNA central domain where it helps coordinate assembly of the platform of the 30S subunit. In Tupiella akineta (Green alga), this protein is Small ribosomal subunit protein uS8c (rps8).